The chain runs to 703 residues: Calpain-8 (703 aa).

The 300-residue stretch at 45-344 (LFKDPEFPAC…FSRLEICNLS (300 aa)) folds into the Calpain catalytic domain. Active-site residues include Cys105, His262, and Asn286. The domain III stretch occupies residues 355–512 (KWNLVLFNGR…VFSEKKAQAL (158 aa)). A linker region spans residues 513-531 (EIGDAVPGDPHEPHPRDMD). 4 EF-hand domains span residues 531-566 (DGED…LLSK), 575-610 (FNIN…ICKY), 605-640 (LKIC…AGFT), and 670-703 (IRLE…RALV). Residues 532-703 (GEDEHFWSLS…LAEWLCRALV (172 aa)) are domain IV. 9 residues coordinate Ca(2+): Asp588, Asp590, Thr592, Ser594, Glu599, Asp618, Ser620, Thr624, and Glu629.

It belongs to the peptidase C2 family. In terms of assembly, monomer and homooligomer. Interacts with COPS1/GPS1, COPB1, EYA2, NME2, NME4 and TOMM70. Requires Ca(2+) as cofactor. In terms of processing, undergoes autolytic cleavage between Ala-5 and Ala-6 which gives rise to fragments extending from Ala-6 to the C-terminus, Ala-6 to the EF-hand 2 domain and from Ala-6 to the beginning of domain III. Predominantly expressed in the stomach. Localizes strictly to the surface mucus cells in the gastric epithelium and the mucus-secreting goblet cells in the duodenum.

Its subcellular location is the cytoplasm. The protein resides in the golgi apparatus. It carries out the reaction Broad endopeptidase specificity.. With respect to regulation, the concentration of calcium for half-maximal activity is 0.3 mM. Inhibited by calpastatin and calpeptin. Its function is as follows. Calcium-regulated non-lysosomal thiol-protease. Involved in membrane trafficking in the gastric surface mucus cells (pit cells) and may involve the membrane trafficking of mucus cells via interactions with coat protein. Proteolytically cleaves the beta-subunit of coatomer complex. The protein is Calpain-8 (Capn8) of Mus musculus (Mouse).